Reading from the N-terminus, the 300-residue chain is Ribosomal protein L11 methyltransferase (300 aa).

The S-adenosyl-L-methionine site is built by threonine 152, glycine 173, aspartate 195, and asparagine 234.

It belongs to the methyltransferase superfamily. PrmA family.

The protein localises to the cytoplasm. It catalyses the reaction L-lysyl-[protein] + 3 S-adenosyl-L-methionine = N(6),N(6),N(6)-trimethyl-L-lysyl-[protein] + 3 S-adenosyl-L-homocysteine + 3 H(+). Its function is as follows. Methylates ribosomal protein L11. In Paraburkholderia phymatum (strain DSM 17167 / CIP 108236 / LMG 21445 / STM815) (Burkholderia phymatum), this protein is Ribosomal protein L11 methyltransferase.